The primary structure comprises 180 residues: uncharacterized protein (180 aa).

A coiled-coil region spans residues 114-147 (EDIYEDIVDVRLENQSLEEQLEDFKECSRALKKY).

This sequence belongs to the mimivirus L74/L77/R857 family.

This is an uncharacterized protein from Acanthamoeba polyphaga mimivirus (APMV).